Here is a 953-residue protein sequence, read N- to C-terminus: Ubiquitin carboxyl-terminal hydrolase CYLD (953 aa).

The tract at residues 106–590 is interaction with TRIP; it reads CEERFSLFKN…FEIMIGKKKG (485 aa). CAP-Gly domains follow at residues 153-198 and 253-286; these read LAER…VFVA and DVLP…VQLC. Disordered regions lie at residues 313 to 349 and 384 to 410; these read PPKL…RNRS and SLTE…LSSE. The span at 337 to 346 shows a compositional bias: polar residues; that stretch reads TGSTSDPGTR. S384, S415, and S419 each carry phosphoserine. The interaction with TRAF2 stretch occupies residues 391–466; it reads DFGHASPPLQ…LAVSSGNSHG (76 aa). Positions 467 to 681 are interaction with IKBKG/NEMO; the sequence is LEVGSLAEVK…FTSEEKDPEE (215 aa). The CAP-Gly 3 domain maps to 489–532; the sequence is GQPPGLNEVLAGLELEDECAGCTDGTFRGTRYFTCALKKALFVK. The 359-residue stretch at 589 to 947 folds into the USP domain; the sequence is KGIQGHYNSC…DAYMCMYQSP (359 aa). The Nucleophile role is filled by C598. The B-box stretch occupies residues 778–830; it reads LEDTPRQCRICGGLAMYECRECYDDPDISAGKIKQFCKTCNAQVHLHPKRLNH. Zn(2+)-binding residues include C785, C788, C796, C799, C814, C817, H822, and H830. Catalysis depends on H868, which acts as the Proton acceptor.

It belongs to the peptidase C19 family. Interacts (via CAP-Gly domain) with IKBKG/NEMO (via proline-rich C-terminal region). Interacts with TRAF2 and TRIP. Interacts with PLK1, DVL1, DVL3, MAVS, TBK1, IKKE and RIGI. Interacts (via CAP-Gly domain) with microtubules. Interacts with HDAC6 and BCL3. Interacts with MAP3K7. Identified in a complex with TRAF6 and SQSTM1. Interacts with OPTN and SQSTM1. Interacts with CEP350. Interacts with RNF31; the interaction is indirect and is mediated via SPATA2. Interacts with SPATA2 (via the PUB domain); the interaction is direct and recruits CYLD to the LUBAC complex, thereby regulating TNF-alpha-induced necroptosis. Post-translationally, phosphorylated on several serine residues by IKKA and/or IKKB in response to immune stimuli. Phosphorylation requires IKBKG. Phosphorylation abolishes TRAF2 deubiquitination, interferes with the activation of Jun kinases, and strongly reduces CD40-dependent gene activation by NF-kappa-B. In terms of processing, ubiquitinated. Polyubiquitinated in hepatocytes treated with palmitic acid. Ubiquitination is mediated by E3 ligase TRIM47 and leads to proteasomal degradation.

The protein resides in the cytoplasm. It localises to the perinuclear region. The protein localises to the cytoskeleton. Its subcellular location is the cell membrane. It is found in the microtubule organizing center. The protein resides in the centrosome. It localises to the spindle. The protein localises to the cilium basal body. The catalysed reaction is Thiol-dependent hydrolysis of ester, thioester, amide, peptide and isopeptide bonds formed by the C-terminal Gly of ubiquitin (a 76-residue protein attached to proteins as an intracellular targeting signal).. In terms of biological role, deubiquitinase that specifically cleaves 'Lys-63'- and linear 'Met-1'-linked polyubiquitin chains and is involved in NF-kappa-B activation and TNF-alpha-induced necroptosis. Negatively regulates NF-kappa-B activation by deubiquitinating upstream signaling factors. Contributes to the regulation of cell survival, proliferation and differentiation via its effects on NF-kappa-B activation. Negative regulator of Wnt signaling. Inhibits HDAC6 and thereby promotes acetylation of alpha-tubulin and stabilization of microtubules. Plays a role in the regulation of microtubule dynamics, and thereby contributes to the regulation of cell proliferation, cell polarization, cell migration, and angiogenesis. Required for normal cell cycle progress and normal cytokinesis. Inhibits nuclear translocation of NF-kappa-B. Plays a role in the regulation of inflammation and the innate immune response, via its effects on NF-kappa-B activation. Dispensable for the maturation of intrathymic natural killer cells, but required for the continued survival of immature natural killer cells. Negatively regulates TNFRSF11A signaling and osteoclastogenesis. Involved in the regulation of ciliogenesis, allowing ciliary basal bodies to migrate and dock to the plasma membrane; this process does not depend on NF-kappa-B activation. Ability to remove linear ('Met-1'-linked) polyubiquitin chains regulates innate immunity and TNF-alpha-induced necroptosis: recruited to the LUBAC complex via interaction with SPATA2 and restricts linear polyubiquitin formation on target proteins. Regulates innate immunity by restricting linear polyubiquitin formation on RIPK2 in response to NOD2 stimulation. Involved in TNF-alpha-induced necroptosis by removing linear ('Met-1'-linked) polyubiquitin chains from RIPK1, thereby regulating the kinase activity of RIPK1. Negatively regulates intestinal inflammation by removing 'Lys-63' linked polyubiquitin chain of NLRP6, thereby reducing the interaction between NLRP6 and PYCARD/ASC and formation of the NLRP6 inflammasome. Does not catalyze deubiquitination of heterotypic 'Lys-63'-/'Lys-48'-linked branched ubiquitin chains. Removes 'Lys-63' linked polyubiquitin chain of MAP3K7, which inhibits phosphorylation and blocks downstream activation of the JNK-p38 kinase cascades. Also removes 'Lys-63'-linked polyubiquitin chains of MAP3K1 and MA3P3K3, which inhibit their interaction with MAP2K1 and MAP2K2. The protein is Ubiquitin carboxyl-terminal hydrolase CYLD (CYLD) of Bos taurus (Bovine).